A 307-amino-acid chain; its full sequence is uncharacterized protein (307 aa).

8 helical membrane-spanning segments follow: residues 1 to 21 (MLILISFTALILFFLAGMNML), 52 to 72 (IVFTGILQSSSAFMVIVIGFV), 99 to 119 (FIAIKMDIVIWVLLIGGLLFF), 133 to 153 (FLGLGIIFFCISGFSHLAGPL), 174 to 194 (LLIGMVLTAIIHSSSVCIGIL), 208 to 228 (AMSVVLGSNIGTCITAVMAAV), 242 to 262 (VVFNVLGVALVLPFLTAATGF), and 277 to 297 (FSLLFNVVTALLFLPLTNLFY).

The protein localises to the cell membrane. This is an uncharacterized protein from Bacillus subtilis (strain 168).